A 1444-amino-acid polypeptide reads, in one-letter code: ABC transporter G family member 39 (1444 aa).

The interval 1–36 is disordered; sequence MDIVRMGSVASGGGSVRRTASSWRGTSGRSDAFGRS. Polar residues predominate over residues 19-29; sequence TASSWRGTSGR. Positions 154 to 426 constitute an ABC transporter 1 domain; it reads LSAMRIVSSG…FEAMGFKCPE (273 aa). Position 187 to 194 (187 to 194) interacts with ATP; that stretch reads GPPGSGKT. An ABC transmembrane type-2 1 domain is found at 504–717; sequence ELTKACFSRE…AQNAIAVNEF (214 aa). Helical transmembrane passes span 522-542, 555-575, 610-630, 642-662, 667-687, and 754-774; these read FVYIFKILQLIILGSIGMTVF, GAIFLGAMFLGLVTHLFNGFA, IPISFLECAVWICMTYYVMGF, VLLVLISQMASGLFRLLAALG, VADTFGSFAQLILLVLGGFLI, and IGVGALLGYIMLFNILFILFL. The region spanning 846–1098 is the ABC transporter 2 domain; it reads ITFDNIRYSV…HLINYFEGIQ (253 aa). 891–898 is an ATP binding site; that stretch reads GVSGAGKT. Residues 1171-1385 form the ABC transmembrane type-2 2 domain; it reads TQCMACLWKQ…TLYGLVASQY (215 aa). A run of 7 helical transmembrane segments spans residues 1192–1212, 1220–1240, 1278–1298, 1305–1325, 1335–1355, 1362–1382, and 1414–1434; these read ATRIFFTTVIALIFGTIFLNL, LDLFNSLGSMYAAVLFIGIQN, IPHIFLQTVVYGLIVYSLIGF, FFWYMFFMFFTFMYFTFYGMM, IAAIVSTAFYCIWNIFAGFLI, IWWRWYSWACPVAWTLYGLVA, and LGYVATAVVGFAALFAFVFAF.

Belongs to the ABC transporter superfamily. ABCG family. PDR (TC 3.A.1.205) subfamily.

The protein resides in the membrane. Functionally, may be a general defense protein. This Oryza sativa subsp. japonica (Rice) protein is ABC transporter G family member 39.